A 228-amino-acid polypeptide reads, in one-letter code: DNA repair protein RecO (228 aa).

This sequence belongs to the RecO family.

Functionally, involved in DNA repair and RecF pathway recombination. In Mannheimia succiniciproducens (strain KCTC 0769BP / MBEL55E), this protein is DNA repair protein RecO.